A 214-amino-acid chain; its full sequence is Probable GTP-binding protein EngB (214 aa).

The region spanning 30-204 is the EngB-type G domain; sequence EGFEVAFAGR…YTVLAGWMEL (175 aa). Residues 38-45, 64-68, 82-85, 149-152, and 182-185 contribute to the GTP site; these read GRSNAGKS, GRTQL, DLPG, TKAD, and LFSA. Residues serine 45 and threonine 66 each contribute to the Mg(2+) site.

Belongs to the TRAFAC class TrmE-Era-EngA-EngB-Septin-like GTPase superfamily. EngB GTPase family. The cofactor is Mg(2+).

Functionally, necessary for normal cell division and for the maintenance of normal septation. This Pseudomonas fluorescens (strain Pf0-1) protein is Probable GTP-binding protein EngB.